A 244-amino-acid polypeptide reads, in one-letter code: Ureidoacrylate amidohydrolase RutB (244 aa).

Catalysis depends on aspartate 38, which acts as the Proton acceptor. Residue lysine 147 is part of the active site. Cysteine 180 (nucleophile) is an active-site residue.

This sequence belongs to the isochorismatase family. RutB subfamily.

It carries out the reaction (Z)-3-ureidoacrylate + H2O + H(+) = (Z)-3-aminoacrylate + NH4(+) + CO2. The enzyme catalyses (Z)-3-ureidoacrylate + H2O = (Z)-3-aminoacrylate + carbamate + H(+). The catalysed reaction is (Z)-2-methylureidoacrylate + H2O + H(+) = (Z)-2-methylaminoacrylate + NH4(+) + CO2. Hydrolyzes ureidoacrylate to form aminoacrylate and carbamate. The carbamate hydrolyzes spontaneously, thereby releasing one of the nitrogen atoms of the pyrimidine ring as ammonia and one of its carbon atoms as CO2. This Escherichia coli O6:H1 (strain CFT073 / ATCC 700928 / UPEC) protein is Ureidoacrylate amidohydrolase RutB.